Here is a 1014-residue protein sequence, read N- to C-terminus: Exportin-T (1014 aa).

This sequence belongs to the exportin family.

It localises to the nucleus. The protein resides in the cytoplasm. In terms of biological role, tRNA nucleus export receptor which facilitates tRNA translocation across the nuclear pore complex. Involved in pre-tRNA splicing, probably by affecting the interaction of pre-tRNA with splicing endonuclease. The chain is Exportin-T (LOS1) from Podospora anserina (strain S / ATCC MYA-4624 / DSM 980 / FGSC 10383) (Pleurage anserina).